Here is a 629-residue protein sequence, read N- to C-terminus: Replication protein A 70 kDa DNA-binding subunit D (629 aa).

The disordered stretch occupies residues 112 to 135; that stretch reads LDSKSGEEEAREPKKQKLEHSPVS. The segment covering 115–131 has biased composition (basic and acidic residues); the sequence is KSGEEEAREPKKQKLEH. Residues 194 to 280 constitute a DNA-binding region (OB); it reads WTIKVRVTNK…QNDYEMTLNE (87 aa). The segment at 492–512 adopts a C4-type zinc-finger fold; that stretch reads CKTCNKKVTEALDSGYWCEGC.

The protein belongs to the replication factor A protein 1 family. Heterotrimer of RPA1, RPA2 and RPA3 (canonical replication protein A complex).

The protein localises to the nucleus. In terms of biological role, component of the replication protein A complex (RPA) required for DNA recombination, repair and replication. The activity of RPA is mediated by single-stranded DNA binding and protein interactions. Probably involved in repair of double-strand DNA breaks (DSBs) induced by genotoxic stresses. The protein is Replication protein A 70 kDa DNA-binding subunit D (RPA1D) of Arabidopsis thaliana (Mouse-ear cress).